A 435-amino-acid chain; its full sequence is MYSNFKEQAIEYVKQAVHEDNAGNYNKAFPLYMNALEYFKTHLKYEKNPKIREAITQKFTEYLRRAEEIRAVLDEGGSGPGSNGDAAVATRPKTKPKDGEGGGKDGEDPEQSKLRAGLNSAIVREKPNIKWSDVAGLESAKQALQEAVILPVKFPQFFTGKRRPWRAFLLYGPPGTGKSYLAKAVATEADSTFFSVSSSDLVSKWMGESEKLVSNLFEMARESAPSIIFVDEIDSLCGTRGEGNESEASRRIKTELLVQMQGVGHNDEKVLVLAATNTPYALDQAIRRRFDKRIYIPLPEAKARQHMFKVHLGDTPHNLTEPDFEYLGQKTEGFSGSDVSVCVKDVLFEPVRKTQDAMFFFKSPDGTWMPCGPRHPGAIQTTMQDLATKGLAEKIIPPPITRTDFEKVLARQRPTVSKSDLDVHERFTQEFGEEG.

The MIT domain occupies 7-72 (EQAIEYVKQA…LRRAEEIRAV (66 aa)). Positions 73–113 (LDEGGSGPGSNGDAAVATRPKTKPKDGEGGGKDGEDPEQSK) are disordered. Residues 95–113 (KPKDGEGGGKDGEDPEQSK) show a composition bias toward basic and acidic residues. An ATP-binding site is contributed by 172–179 (GPPGTGKS).

It belongs to the AAA ATPase family. As to quaternary structure, monomer or homodimer (in nucleotide-free form). Decamer, dodecamer or tetradecamer of two stacked respective homooligomeric rings (when bound to ATP); the dodecameric form seems to be predominant. Interacts with members of the ESCRT-III subcomplex such as LIP5, VPS60-1, VPS2.1, VPS20.1, VPS20.2, VPS24-1, VPS32.1, VPS32.2, CHMP1A and VPS24. Binds to PROS/At4g24370. In terms of tissue distribution, mostly expressed in leaves, to a lower extent in seeds, and barely in roots and flowers (at protein level). Particularly expressed in trichomes.

It localises to the cytoplasm. It is found in the nucleus. The protein resides in the endosome. The protein localises to the multivesicular body membrane. Its subcellular location is the prevacuolar compartment membrane. It catalyses the reaction ATP + H2O = ADP + phosphate + H(+). Its activity is regulated as follows. Activated by LIP5 and PROS. Functionally, involved in the transport of biosynthetic membrane proteins from the prevacuolar/endosomal compartment to the vacuole. Required for multivesicular body (MVB) protein sorting. Catalyzes the ATP-dependent dissociation of class E VPS proteins from endosomal membranes, such as the disassembly of the ESCRT-III complex. May also regulate cell cycle. Required during seed development for the formation of mucilage in seed coat and testa. Involved in the maintenance of Na(+)/K(+) homeostasis under salt stress. Required for cell expansion. This chain is Protein SUPPRESSOR OF K(+) TRANSPORT GROWTH DEFECT 1, found in Arabidopsis thaliana (Mouse-ear cress).